A 147-amino-acid polypeptide reads, in one-letter code: UPF0260 protein PMI1174 (147 aa).

Belongs to the UPF0260 family.

The sequence is that of UPF0260 protein PMI1174 from Proteus mirabilis (strain HI4320).